Consider the following 252-residue polypeptide: Beta-carotene isomerase D27, chloroplastic (252 aa).

Residues 1 to 43 constitute a chloroplast transit peptide; it reads MDSKMIAHNMSLTPTLAQWKKLRLKPKHTFVVGVLARPTDDIS.

Requires Fe cation as cofactor. Highly expressed in roots. Expressed at low levels in leaves and stems.

It localises to the plastid. Its subcellular location is the chloroplast. The catalysed reaction is all-trans-beta-carotene = 9-cis-beta-carotene. Its function is as follows. Involved in strigolactones biosynthesis by catalyzing the isomerization of the C9-C10 double bond in all-trans-beta-carotene leading to 9-cis-beta-carotene and providing the substrate for CCD7. Strigolactones are hormones that inhibit tillering and shoot branching through the MAX-dependent pathway, contribute to the regulation of shoot architectural response to phosphate-limiting conditions and function as rhizosphere signals that stimulate hyphal branching of arbuscular mycorrhizal fungi and trigger seed germination of root parasitic weeds. In Medicago truncatula (Barrel medic), this protein is Beta-carotene isomerase D27, chloroplastic.